The chain runs to 393 residues: uncharacterized protein (393 aa).

Residues cysteine 9, cysteine 15, cysteine 18, and cysteine 97 each coordinate [4Fe-4S] cluster. S-adenosyl-L-methionine-binding residues include glutamine 231, tyrosine 258, glutamate 279, and aspartate 325. Cysteine 352 functions as the Nucleophile in the catalytic mechanism.

This sequence belongs to the class I-like SAM-binding methyltransferase superfamily. RNA M5U methyltransferase family.

This is an uncharacterized protein from Leptospira interrogans serogroup Icterohaemorrhagiae serovar Lai (strain 56601).